Reading from the N-terminus, the 258-residue chain is Glucanase inhibitor protein 3 (258 aa).

A signal peptide spans 1–19; that stretch reads MKIISAVAASSIALGAVSA. The 228-residue stretch at 29-256 folds into the Peptidase S1 domain; it reads VLGGAVVPSG…ALEWINSITK (228 aa). C56 and C72 are joined by a disulfide. N-linked (GlcNAc...) asparagine glycans are attached at residues N90, N105, and N110. 2 disulfides stabilise this stretch: C180–C192 and C202–C233.

The protein belongs to the peptidase S1 family. In terms of assembly, forms an apoplastic complex with host endoglucanases in tomato leaves during P.infestans infection.

It is found in the secreted. Secreted effector that suppresses host plant glucan elicitor-mediated defense responses. Targets host endoglucanases and inhibits the endoglucanase-mediated release of elicitor-active glucan oligosaccharides from P.infestans cell walls. The sequence is that of Glucanase inhibitor protein 3 from Phytophthora infestans (Potato late blight agent).